An 890-amino-acid chain; its full sequence is DNA mismatch repair protein MutS (890 aa).

645 to 652 (GPNMAGKS) is an ATP binding site.

It belongs to the DNA mismatch repair MutS family.

In terms of biological role, this protein is involved in the repair of mismatches in DNA. It is possible that it carries out the mismatch recognition step. This protein has a weak ATPase activity. This is DNA mismatch repair protein MutS from Rickettsia conorii (strain ATCC VR-613 / Malish 7).